A 471-amino-acid polypeptide reads, in one-letter code: Uronate isomerase (471 aa).

Belongs to the metallo-dependent hydrolases superfamily. Uronate isomerase family.

It carries out the reaction D-glucuronate = D-fructuronate. The enzyme catalyses aldehydo-D-galacturonate = keto-D-tagaturonate. It participates in carbohydrate metabolism; pentose and glucuronate interconversion. The polypeptide is Uronate isomerase (Xanthomonas campestris pv. campestris (strain B100)).